A 719-amino-acid chain; its full sequence is MNKPTILRLIKYLSISFLSLVIAAIVLGGGVFFYYVSKAPSLSESKLVATTSSKIYDNKNQLIADLGSERRVNAQANDIPTDLVKAIVSIEDHRFFDHRGIDTIRILGAFLRNLQSNSLQGGSALTQQLIKLTYFSTSTSDQTISRKAQEAWLAIQLEQKATKQEILTYYINKVYMSNGNYGMQTAAQNYYGKDLNNLSLPQLALLAGMPQAPNQYDPYSHPEAAQDRRNLVLSEMKNQGYISAEQYEKAVNTPITDGLQSLKSASNYPAYMDNYLKEVINQVEEETGYNLLTTGMDVYTNVDQEAQKHLWDIYNTDEYVAYPDDELQVASTIVDVSNGKVIAQLGARHQSSNVSFGINQAVETNRDWGSTMKPITDYAPALEYGVYESTATIVHDEPYNYPGTNTPVYNWDRGYFGNITLQYALQQSRNVPAVETLNKVGLNRAKTFLNGLGIDYPSIHYSNAISSNTTESDKKYGASSEKMAAAYAAFANGGTYYKPMYIHKVVFSDGSEKEFSNVGTRAMKETTAYMMTDMMKTVLSYGTGRNAYLAWLPQAGKTGTSNYTDEEIENHIKTSQFVAPDELFAGYTRKYSMAVWTGYSNRLTPLVGNGLTVAAKVYRSMMTYLSEGSNPEDWNIPEGLYRNGEFVFKNGARSTWSSPAPQQPPSTESSSSSSDSSTSQSSSTTPSTNNSTTTNPNNNTQQSNTTPDQQNQNPQPAQP.

The segment at 62 to 223 (LIADLGSERR…NQYDPYSHPE (162 aa)) is transglycosylase. Residue E91 is the Proton donor; for transglycosylase activity of the active site. Residues 297–611 (DVYTNVDQEA…RLTPLVGNGL (315 aa)) form a transpeptidase region. Catalysis depends on S370, which acts as the Acyl-ester intermediate; for transpeptidase activity. The tract at residues 652-719 (ARSTWSSPAP…QNQNPQPAQP (68 aa)) is disordered. Low complexity predominate over residues 654 to 719 (STWSSPAPQQ…QNQNPQPAQP (66 aa)).

This sequence in the N-terminal section; belongs to the glycosyltransferase 51 family. It in the C-terminal section; belongs to the transpeptidase family. Interacts with MreC in the elongasome.

The protein resides in the secreted. It catalyses the reaction [GlcNAc-(1-&gt;4)-Mur2Ac(oyl-L-Ala-gamma-D-Glu-L-Lys-D-Ala-D-Ala)](n)-di-trans,octa-cis-undecaprenyl diphosphate + beta-D-GlcNAc-(1-&gt;4)-Mur2Ac(oyl-L-Ala-gamma-D-Glu-L-Lys-D-Ala-D-Ala)-di-trans,octa-cis-undecaprenyl diphosphate = [GlcNAc-(1-&gt;4)-Mur2Ac(oyl-L-Ala-gamma-D-Glu-L-Lys-D-Ala-D-Ala)](n+1)-di-trans,octa-cis-undecaprenyl diphosphate + di-trans,octa-cis-undecaprenyl diphosphate + H(+). The enzyme catalyses Preferential cleavage: (Ac)2-L-Lys-D-Ala-|-D-Ala. Also transpeptidation of peptidyl-alanyl moieties that are N-acyl substituents of D-alanine.. The protein operates within cell wall biogenesis; peptidoglycan biosynthesis. Cell wall formation. This chain is Penicillin-binding protein 1A (pbpA), found in Streptococcus pneumoniae (strain ATCC BAA-255 / R6).